The sequence spans 787 residues: Transcription factor SOX-6 (787 aa).

The segment at 1-46 (MSSKQATSPFACAADGEDAMTQDLTSREKEEGSDQHVASHLPLHPI) is disordered. The span at 25–34 (TSREKEEGSD) shows a compositional bias: basic and acidic residues. Threonine 119 carries the phosphothreonine modification. The stretch at 184–262 (LAEKERQLST…LLQQQIQVQG (79 aa)) forms a coiled coil. A disordered region spans residues 340–429 (PGAKMPSTPQ…KSSIPSPIGG (90 aa)). Residues 352–361 (NTAGTVSPTG) are compositionally biased toward polar residues. The residue at position 358 (serine 358) is a Phosphoserine. Phosphothreonine is present on threonine 360. Residues lysine 363 and lysine 376 each participate in a glycyl lysine isopeptide (Lys-Gly) (interchain with G-Cter in SUMO) cross-link. 2 positions are modified to phosphoserine: serine 398 and serine 401. The segment covering 398–420 (SPTSPTQNLFPASKTSPVNLPNK) has biased composition (polar residues). The HMG box DNA-binding region spans 580-648 (IKRPMNAFMV…IHLEKYPNYK (69 aa)). Residues 712 to 740 (TPSPQMTSDCSSTSASPEPSLPVIQSTYG) show a composition bias toward polar residues. The interval 712–787 (TPSPQMTSDC…NEAPEAVSAN (76 aa)) is disordered. Positions 755–768 (NGEDEMEMYDDYED) are enriched in acidic residues.

Homodimer. Interacts with DAZAP2. May interact with CENPK. Post-translationally, sumoylation inhibits the transcriptional activity.

It localises to the nucleus. Its subcellular location is the cytoplasm. Its function is as follows. Transcription factor that plays a key role in several developmental processes, including neurogenesis, chondrocytes differentiation and cartilage formation. Specifically binds the 5'-AACAAT-3' DNA motif present in enhancers and super-enhancers and promotes expression of genes important for chondrogenesis. Required for overt chondrogenesis when condensed prechondrocytes differentiate into early stage chondrocytes: SOX5 and SOX6 cooperatively bind with SOX9 on active enhancers and super-enhancers associated with cartilage-specific genes, and thereby potentiate SOX9's ability to transactivate. Not involved in precartilaginous condensation, the first step in chondrogenesis, during which skeletal progenitors differentiate into prechondrocytes. Together with SOX5, required to form and maintain a pool of highly proliferating chondroblasts between epiphyses and metaphyses, to form columnar chondroblasts, delay chondrocyte prehypertrophy but promote hypertrophy, and to delay terminal differentiation of chondrocytes on contact with ossification fronts. Binds to the proximal promoter region of the myelin protein MPZ gene, and is thereby involved in the differentiation of oligodendroglia in the developing spinal tube. Binds to the gene promoter of MBP and acts as a transcriptional repressor. In Pongo abelii (Sumatran orangutan), this protein is Transcription factor SOX-6.